Reading from the N-terminus, the 756-residue chain is Phosphoinositide 3-kinase regulatory subunit 6 (756 aa).

Disordered regions lie at residues S570 to G589 and C716 to M738. Over residues S717–G731 the composition is skewed to polar residues.

In terms of assembly, heterodimer of a catalytic subunit (PIK3CG) and a regulatory (PIK3R6) subunit. The binding of PIK3R6 to PIK3CG may exclude the binding of PIK3R5 to PIK3CG. Interacts with beta-gamma G protein dimers. Interacts with PDE3B and RAPGEF3; form a signaling complex that regulates phosphatidylinositol 3-kinase gamma in angiogenesis. As to expression, highly expressed in heart. In a lower extent, also expressed in brain, spleen, lung, liver, kidney, prostate, thyroid, salivary gland, dendritic cells, macrophages and neutrophils.

Its subcellular location is the cytoplasm. The protein localises to the cell membrane. In terms of biological role, regulatory subunit of the PI3K gamma complex. Acts as an adapter to drive activation of PIK3CG by beta-gamma G protein dimers. The PIK3CG:PIK3R6 heterodimer is much less sensitive to beta-gamma G proteins than PIK3CG:PIK3R5 and its membrane recruitment and beta-gamma G protein dimer-dependent activation requires HRAS bound to PIK3CG. Recruits of the PI3K gamma complex to a PDE3B:RAPGEF3 signaling complex involved in angiogenesis; signaling seems to involve RRAS. This is Phosphoinositide 3-kinase regulatory subunit 6 (Pik3r6) from Mus musculus (Mouse).